A 130-amino-acid polypeptide reads, in one-letter code: Large ribosomal subunit protein bL17 (130 aa).

This sequence belongs to the bacterial ribosomal protein bL17 family. In terms of assembly, part of the 50S ribosomal subunit. Contacts protein L32.

This chain is Large ribosomal subunit protein bL17, found in Photorhabdus laumondii subsp. laumondii (strain DSM 15139 / CIP 105565 / TT01) (Photorhabdus luminescens subsp. laumondii).